A 360-amino-acid chain; its full sequence is Histidinol-phosphate aminotransferase (360 aa).

K222 carries the post-translational modification N6-(pyridoxal phosphate)lysine.

The protein belongs to the class-II pyridoxal-phosphate-dependent aminotransferase family. Histidinol-phosphate aminotransferase subfamily. Requires pyridoxal 5'-phosphate as cofactor.

It catalyses the reaction L-histidinol phosphate + 2-oxoglutarate = 3-(imidazol-4-yl)-2-oxopropyl phosphate + L-glutamate. It functions in the pathway amino-acid biosynthesis; L-histidine biosynthesis; L-histidine from 5-phospho-alpha-D-ribose 1-diphosphate: step 7/9. This chain is Histidinol-phosphate aminotransferase, found in Haloarcula marismortui (strain ATCC 43049 / DSM 3752 / JCM 8966 / VKM B-1809) (Halobacterium marismortui).